Consider the following 368-residue polypeptide: 4-hydroxy-3-methylbut-2-en-1-yl diphosphate synthase (flavodoxin) (368 aa).

4 residues coordinate [4Fe-4S] cluster: Cys-268, Cys-271, Cys-303, and Glu-310.

The protein belongs to the IspG family. [4Fe-4S] cluster is required as a cofactor.

The catalysed reaction is (2E)-4-hydroxy-3-methylbut-2-enyl diphosphate + oxidized [flavodoxin] + H2O + 2 H(+) = 2-C-methyl-D-erythritol 2,4-cyclic diphosphate + reduced [flavodoxin]. The protein operates within isoprenoid biosynthesis; isopentenyl diphosphate biosynthesis via DXP pathway; isopentenyl diphosphate from 1-deoxy-D-xylulose 5-phosphate: step 5/6. Functionally, converts 2C-methyl-D-erythritol 2,4-cyclodiphosphate (ME-2,4cPP) into 1-hydroxy-2-methyl-2-(E)-butenyl 4-diphosphate. The polypeptide is 4-hydroxy-3-methylbut-2-en-1-yl diphosphate synthase (flavodoxin) (Listeria monocytogenes serovar 1/2a (strain ATCC BAA-679 / EGD-e)).